The chain runs to 326 residues: Balbiani ring protein 1 (326 aa).

Positions 1–33 (PSKSGPRPSKSGPRPSKSGPRPSKSGPRPSKSG) are enriched in low complexity. The interval 1–119 (PSKSGPRPSK…RESPVCDDAM (119 aa)) is disordered. The span at 34–51 (PRPEKCGSAMRKAEAEKC) shows a compositional bias: basic and acidic residues. Over residues 93–102 (VTPTPEVPTT) the composition is skewed to low complexity. Residues 107–119 (SESRESPVCDDAM) are compositionally biased toward basic and acidic residues.

As to expression, salivary gland.

It localises to the secreted. Used by the larvae to construct a supramolecular structure, the larval tube. The polypeptide is Balbiani ring protein 1 (BR1) (Chironomus pallidivittatus (Midge)).